Reading from the N-terminus, the 71-residue chain is Small ribosomal subunit protein bS21 (71 aa).

The disordered stretch occupies residues 38-71 (YEKPTTVRKRAKAAAQKRHAKKLSRENARRVRLY). The span at 43–59 (TVRKRAKAAAQKRHAKK) shows a compositional bias: basic residues. Residues 60 to 71 (LSRENARRVRLY) are compositionally biased toward basic and acidic residues.

This sequence belongs to the bacterial ribosomal protein bS21 family.

The polypeptide is Small ribosomal subunit protein bS21 (Aliivibrio fischeri (strain ATCC 700601 / ES114) (Vibrio fischeri)).